We begin with the raw amino-acid sequence, 1094 residues long: Protein transport protein Sec24C (1094 aa).

Residues 1-338 (MNVNQSVPPV…PIQVIEDDRN (338 aa)) are disordered. The segment covering 8–19 (PPVPPFGQPQPI) has biased composition (pro residues). Composition is skewed to low complexity over residues 20–29 (YPGYHQSSYG) and 60–77 (SRAP…AQAP). The segment covering 90–101 (DVQNGPSSTVQM) has biased composition (polar residues). Residues 123 to 132 (VLQPYGPPPT) show a composition bias toward pro residues. 4 stretches are compositionally biased toward polar residues: residues 133-144 (SAQVATQLSGMQ), 165-175 (SLASASGSFPN), 189-215 (PLSQ…SFTP), and 240-251 (SVSQPNHVSSPP). The residue at position 214 (T214) is a Phosphothreonine. Low complexity predominate over residues 273-282 (PQQPGYQPQQ). Residues C425, C428, C447, and C450 each contribute to the Zn(2+) site. Positions 425–450 (CNRCKAYMCPFMQFIEGGRRFQCCFC) are zinc finger-like. The Gelsolin-like repeat unit spans residues 962–1034 (TTEPPAVRAS…DNPLSKKVRG (73 aa)).

Belongs to the SEC23/SEC24 family. SEC24 subfamily. COPII is composed of at least five proteins: the Sec23/24 complex, the Sec13/31 complex and Sar1. Interacts with TMED2 and TMED10. Interacts with GOSR2 (via IxM motif) and STX5 (via IxM motif); recruits GOSR2 and STX5 into COPII-coated vesicles. Interacts with DDHD1. Interacts with STING1; promoting STING1 translocation to the COPII vesicles. As to expression, ubiquitous.

The protein resides in the cytoplasmic vesicle. Its subcellular location is the COPII-coated vesicle membrane. It localises to the endoplasmic reticulum membrane. The protein localises to the cytoplasm. It is found in the cytosol. In terms of biological role, component of the coat protein complex II (COPII) which promotes the formation of transport vesicles from the endoplasmic reticulum (ER). The coat has two main functions, the physical deformation of the endoplasmic reticulum membrane into vesicles and the selection of cargo molecules for their transport to the Golgi complex. Plays a central role in cargo selection within the COPII complex and together with SEC24D may have a different specificity compared to SEC24A and SEC24B. May more specifically package GPI-anchored proteins through the cargo receptor TMED10. May also be specific for IxM motif-containing cargos like the SNAREs GOSR2 and STX5. The protein is Protein transport protein Sec24C of Homo sapiens (Human).